The primary structure comprises 163 residues: 6,7-dimethyl-8-ribityllumazine synthase (163 aa).

Residues phenylalanine 27, 58 to 60 (ALE), and 87 to 89 (CVV) each bind 5-amino-6-(D-ribitylamino)uracil. 92–93 (DT) serves as a coordination point for (2S)-2-hydroxy-3-oxobutyl phosphate. Histidine 95 (proton donor) is an active-site residue. Asparagine 120 contacts 5-amino-6-(D-ribitylamino)uracil. Arginine 134 contacts (2S)-2-hydroxy-3-oxobutyl phosphate.

Belongs to the DMRL synthase family.

The catalysed reaction is (2S)-2-hydroxy-3-oxobutyl phosphate + 5-amino-6-(D-ribitylamino)uracil = 6,7-dimethyl-8-(1-D-ribityl)lumazine + phosphate + 2 H2O + H(+). It functions in the pathway cofactor biosynthesis; riboflavin biosynthesis; riboflavin from 2-hydroxy-3-oxobutyl phosphate and 5-amino-6-(D-ribitylamino)uracil: step 1/2. In terms of biological role, catalyzes the formation of 6,7-dimethyl-8-ribityllumazine by condensation of 5-amino-6-(D-ribitylamino)uracil with 3,4-dihydroxy-2-butanone 4-phosphate. This is the penultimate step in the biosynthesis of riboflavin. In Nitrobacter winogradskyi (strain ATCC 25391 / DSM 10237 / CIP 104748 / NCIMB 11846 / Nb-255), this protein is 6,7-dimethyl-8-ribityllumazine synthase.